The following is a 149-amino-acid chain: Large ribosomal subunit protein bL9 (149 aa).

It belongs to the bacterial ribosomal protein bL9 family.

Functionally, binds to the 23S rRNA. In Actinobacillus succinogenes (strain ATCC 55618 / DSM 22257 / CCUG 43843 / 130Z), this protein is Large ribosomal subunit protein bL9.